The primary structure comprises 306 residues: D-alanine--D-alanine ligase B (306 aa).

Residues Glu-15 and Ser-150 contribute to the active site. The region spanning Lys-101 to Glu-303 is the ATP-grasp domain. Residue Ile-134 to Thr-189 coordinates ATP. Asp-257, Glu-270, and Asn-272 together coordinate Mg(2+). Ser-281 is an active-site residue.

Belongs to the D-alanine--D-alanine ligase family. As to quaternary structure, monomer. Mg(2+) is required as a cofactor. Requires Mn(2+) as cofactor.

Its subcellular location is the cytoplasm. It catalyses the reaction 2 D-alanine + ATP = D-alanyl-D-alanine + ADP + phosphate + H(+). It participates in cell wall biogenesis; peptidoglycan biosynthesis. In terms of biological role, cell wall formation. This chain is D-alanine--D-alanine ligase B (ddlB), found in Escherichia coli O157:H7.